Consider the following 383-residue polypeptide: tRNA-specific 2-thiouridylase MnmA (383 aa).

ATP contacts are provided by residues 9–16 and methionine 35; that span reads GMSGGVDS. Residues 95-97 are interaction with target base in tRNA; sequence NPD. The active-site Nucleophile is cysteine 100. A disulfide bond links cysteine 100 and cysteine 196. An ATP-binding site is contributed by glycine 124. The interaction with tRNA stretch occupies residues 146–148; it reads KDQ. Catalysis depends on cysteine 196, which acts as the Cysteine persulfide intermediate. The interaction with tRNA stretch occupies residues 308–309; it reads RY.

It belongs to the MnmA/TRMU family.

It is found in the cytoplasm. It carries out the reaction S-sulfanyl-L-cysteinyl-[protein] + uridine(34) in tRNA + AH2 + ATP = 2-thiouridine(34) in tRNA + L-cysteinyl-[protein] + A + AMP + diphosphate + H(+). Functionally, catalyzes the 2-thiolation of uridine at the wobble position (U34) of tRNA, leading to the formation of s(2)U34. The chain is tRNA-specific 2-thiouridylase MnmA from Burkholderia mallei (strain NCTC 10247).